We begin with the raw amino-acid sequence, 423 residues long: Chitinase 1 (423 aa).

The signal sequence occupies residues methionine 1–alanine 22. A propeptide spanning residues threonine 23–arginine 34 is cleaved from the precursor. The region spanning phenylalanine 38 to glutamine 401 is the GH18 domain. Chitin-binding positions include glycine 102–threonine 103 and glycine 129–threonine 132. Glutamate 171 functions as the Proton donor in the catalytic mechanism. Chitin-binding positions include tyrosine 172, methionine 237–aspartate 240, and tryptophan 378.

This sequence belongs to the glycosyl hydrolase 18 family. Chitinase class V subfamily.

The protein resides in the secreted. It catalyses the reaction Random endo-hydrolysis of N-acetyl-beta-D-glucosaminide (1-&gt;4)-beta-linkages in chitin and chitodextrins.. The protein is Chitinase 1 (CHI1) of Aphanocladium album (Wheat rust fungus).